We begin with the raw amino-acid sequence, 308 residues long: Porphobilinogen deaminase (308 aa).

Position 242 is an S-(dipyrrolylmethanemethyl)cysteine (C242).

It belongs to the HMBS family. Monomer. Dipyrromethane serves as cofactor.

It carries out the reaction 4 porphobilinogen + H2O = hydroxymethylbilane + 4 NH4(+). It functions in the pathway porphyrin-containing compound metabolism; protoporphyrin-IX biosynthesis; coproporphyrinogen-III from 5-aminolevulinate: step 2/4. Its function is as follows. Tetrapolymerization of the monopyrrole PBG into the hydroxymethylbilane pre-uroporphyrinogen in several discrete steps. In Alkalilimnicola ehrlichii (strain ATCC BAA-1101 / DSM 17681 / MLHE-1), this protein is Porphobilinogen deaminase.